A 334-amino-acid polypeptide reads, in one-letter code: MKPKVFITRAIPENGIDMLREHFEVEVWPEEREIPREVLLEKVRDVDALVTMLSERIDGEVFDNAPRLRIVANYAVGYDNVDVEEATRRGIYVTNTPDVLTNATADFAWTLLLATARRLIEADSFTRSGEWKRKGIAWHPLMFLGHDVYGKTIGIIGFGRIGQAVARRAKGFGMRILYYSRTRKPEAEEELKAEFKPLEELLKESDFVVLAVPLTKETYHMIGERELKLMKPTAILVNIARGKVVDTEALIKALKEGWIAGAGLDVFEEEPYYNEELFSLKNVILAPHIGSATFGAREGMAELVARNLIAFKNGEVPPTLVNKEVVKVKKPGFR.

NADP(+) contacts are provided by residues 158-161, 180-182, and 239-241; these read FGRI, SRT, and IAR. Residues Arg241 and Glu270 contribute to the active site. The active-site Proton donor is His288. 288–290 lines the NADP(+) pocket; sequence HIG.

Belongs to the D-isomer specific 2-hydroxyacid dehydrogenase family. GyaR subfamily. In terms of assembly, homodimer.

It localises to the cytoplasm. The enzyme catalyses glycolate + NAD(+) = glyoxylate + NADH + H(+). The chain is Glyoxylate reductase from Thermococcus gammatolerans (strain DSM 15229 / JCM 11827 / EJ3).